The primary structure comprises 528 residues: Acid-sensing ion channel 1 (528 aa).

The Cytoplasmic segment spans residues 1–49 (MELKAEEEEVGGVQPVSIQAFASSSTLHGLAHIFSYERLSLKRALWALC). A helical transmembrane segment spans residues 50–66 (FLGSLAVLLCVCTERVQ). At 67-427 (YYFHYHHVTK…ETIEQKKAYE (361 aa)) the chain is on the extracellular side. 7 disulfide bridges follow: C93–C194, C172–C179, C290–C367, C310–C363, C314–C361, C323–C345, and C325–C337. N-linked (GlcNAc...) asparagine glycans are attached at residues N368 and N395. The discontinuously helical transmembrane segment at 428–458 (IAGLLGDIGGQMGLFIGASILTVLELFDYAY) threads the bilayer. Residues 444–446 (GAS) carry the GAS motif; ion selectivity filter motif. Residues 459-528 (EVIKHKLCRR…ARGTFEDFTC (70 aa)) are Cytoplasmic-facing. At S479 the chain carries Phosphoserine; by PKA. At S499 the chain carries Phosphoserine.

It belongs to the amiloride-sensitive sodium channel (TC 1.A.6) family. ASIC1 subfamily. As to quaternary structure, forms functional homotrimeric channels. Forms heterotrimers with other ASIC proteins, resulting in channels with distinct properties. Interacts with PICK1; regulates ASIC1 clustering in membranes. Interacts with STOM; alters heterotrimeric channels activity. PH-gating could be regulated by serine proteases. Post-translationally, phosphorylation by PKA regulates interaction with PICK1 and subcellular localization. Phosphorylation by PKC may regulate the channel. In terms of tissue distribution, expressed in neurons throughout the central and peripheral nervous system.

The protein resides in the cell membrane. The protein localises to the postsynaptic cell membrane. It localises to the cell projection. It is found in the dendrite. It carries out the reaction Na(+)(in) = Na(+)(out). The enzyme catalyses K(+)(in) = K(+)(out). It catalyses the reaction Li(+)(in) = Li(+)(out). The catalysed reaction is Ca(2+)(in) = Ca(2+)(out). Its activity is regulated as follows. Potentiated by FMRFamide-related neuropeptides, which are induced during inflammation and modulate pain responses. Inhibited by the diuretic drug amiloride. Spider venom psalmotoxin-1 inhibits the channel by locking it in its desensitized conformation. The homotrimeric channel is inhibited by the spider venom pi-theraphotoxin-Hm3a. Homotrimeric and heterotrimeric (with ASIC2 isoform 1) channels are inhibited by the snake venom mambalgin-1, which prevents proton-induced transitions from the resting closed state to the active and/or desensitized states. Inhibited by Texas coral snake toxin MitTx1. Forms voltage-independent, pH-gated trimeric sodium channels that act as postsynaptic excitatory receptors in the nervous system, playing a crucial role in regulating synaptic plasticity, learning, and memory. Upon extracellular pH drop this channel elicits transient, fast activating, and completely desensitizing inward currents. Displays high selectivity for sodium ions but can also permit the permeation of other cations. Regulates more or less directly intracellular calcium concentration and CaMKII phosphorylation, and thereby the density of dendritic spines. Modulates neuronal activity in the circuits underlying innate fear. In terms of biological role, has high selectivity for sodium ions, but can also be permeable to other cations including calcium, lithium and potassium. Functionally, produces acid activated currents with a reduced amplitude and inactivates faster. Has high selectivity for sodium ions but also supports a calcium-mediated current which is sustained and maintained as long as acidic conditions are present. Also potentially permeable to lithium and potassium. Its function is as follows. Has no measurable proton-gated sodium channel activity in vitro. This is Acid-sensing ion channel 1 from Homo sapiens (Human).